A 458-amino-acid polypeptide reads, in one-letter code: Protochlorophyllide reductase, chloroplastic (458 aa).

Belongs to the short-chain dehydrogenases/reductases (SDR) family. POR subfamily.

The protein resides in the plastid. Its subcellular location is the chloroplast. The catalysed reaction is chlorophyllide a + NADP(+) = protochlorophyllide a + NADPH + H(+). Its pathway is porphyrin-containing compound metabolism; chlorophyll biosynthesis. In terms of biological role, phototransformation of protochlorophyllide (Pchlide) to chlorophyllide (Chlide). In Marchantia paleacea (Liverwort), this protein is Protochlorophyllide reductase, chloroplastic (PORA).